The sequence spans 843 residues: Receptor-like serine/threonine-protein kinase SD1-7 (843 aa).

The N-terminal stretch at 1–31 (MRSVPNYHHSFFIFLILILFLAFSVSPNTLS) is a signal peptide. The Bulb-type lectin domain occupies 32 to 151 (ATESLTISSN…NNRLLWQSFD (120 aa)). At 32-435 (ATESLTISSN…LEDKRIKNEK (404 aa)) the chain is on the extracellular side. Asn41, Asn92, Asn116, Asn236, and Asn251 each carry an N-linked (GlcNAc...) asparagine glycan. One can recognise an EGF-like; atypical domain in the interval 286 to 322 (PKDLCDNYKVCGNFGYCDSNSLPNCYCIKGFKPVNEQ). Cystine bridges form between Cys290–Cys302, Cys296–Cys310, Cys372–Cys397, and Cys376–Cys382. The 82-residue stretch at 341–422 (CDGRDGFTRL…GGQDLYVRLA (82 aa)) folds into the PAN domain. A glycan (N-linked (GlcNAc...) asparagine) is linked at Asn381. Residues 436-456 (IIGSSIGVSILLLLSFVIFHF) traverse the membrane as a helical segment. The Cytoplasmic portion of the chain corresponds to 457–843 (WKRKQKRSIT…QITLSVIDAR (387 aa)). The Protein kinase domain occupies 519 to 809 (FSNDNKLGQG…AIPQPKRPGF (291 aa)). Residues 525 to 533 (LGQGGFGIV) and Lys547 each bind ATP. Ser553 carries the phosphoserine modification. Positions 608–625 (TRSSNLNWQKRFDIINGI) are caM-binding. Asp644 serves as the catalytic Proton acceptor. Residues Ser648 and Ser661 each carry the phosphoserine modification. Thr678 carries the post-translational modification Phosphothreonine. At Ser820 the chain carries Phosphoserine.

It belongs to the protein kinase superfamily. Ser/Thr protein kinase family. As to quaternary structure, interacts with PUB9, PUB13, PUB14 and PUB38. Post-translationally, autophosphorylated on serine and threonine residues. In terms of tissue distribution, mostly expressed in leaves, and, to a lower extent, in stems and flower buds.

It localises to the cell membrane. It catalyses the reaction L-seryl-[protein] + ATP = O-phospho-L-seryl-[protein] + ADP + H(+). It carries out the reaction L-threonyl-[protein] + ATP = O-phospho-L-threonyl-[protein] + ADP + H(+). In terms of biological role, involved in the regulation of cellular expansion and differentiation. Mediates subcellular relocalization of PUB9 from nucleus to plasma membrane in a protein-phosphorylation-dependent manner. May be involved in the abscisic acid-mediated signaling pathway, at least during germination. The chain is Receptor-like serine/threonine-protein kinase SD1-7 (SD17) from Arabidopsis thaliana (Mouse-ear cress).